A 241-amino-acid polypeptide reads, in one-letter code: uncharacterized protein (241 aa).

S-adenosyl-L-methionine-binding positions include 78 to 80 (TSA), glycine 111, isoleucine 131, and 138 to 140 (SSL).

The protein belongs to the class IV-like SAM-binding methyltransferase superfamily. RNA methyltransferase TrmH family.

This is an uncharacterized protein from Haemophilus influenzae (strain ATCC 51907 / DSM 11121 / KW20 / Rd).